The sequence spans 505 residues: Activin receptor type-1B (505 aa).

The N-terminal stretch at 1–23 (MAESAGASSFFPLVVLLLAGSGG) is a signal peptide. Topologically, residues 24 to 126 (SGPRGVQALL…EHPSMWGPVE (103 aa)) are extracellular. An N-linked (GlcNAc...) asparagine glycan is attached at asparagine 43. The chain crosses the membrane as a helical span at residues 127–149 (LVGIIAGPVFLLFLIIIIVFLVI). Residues 150–505 (NYHQRVYHNR…QLSVQEDVKI (356 aa)) lie on the Cytoplasmic side of the membrane. The GS domain maps to 177–206 (KTLQDLVYDLSTSGSGSGLPLFVQRTVART). The 291-residue stretch at 207–497 (IVLQEIIGKG…LRIKKTLSQL (291 aa)) folds into the Protein kinase domain. Residues 213–221 (IGKGRFGEV) and lysine 234 contribute to the ATP site. Aspartate 335 (proton acceptor) is an active-site residue. Tyrosine 380 is modified (phosphotyrosine).

Belongs to the protein kinase superfamily. TKL Ser/Thr protein kinase family. TGFB receptor subfamily. Forms an activin receptor complex with activin receptor type-2 (ACVR2A or ACVR2B). Part of a complex consisting of MAGI2/ARIP1, ACVR2A, ACVR1B and SMAD3. Interacts with SMAD2 and SMAD3. Interacts with SMAD7. Interacts with FKBP1A. Interacts with IGSF1. Interacts with CRIPTO. Interacts with TDP2. Interacts with TSC22D1/TSC-22. Mg(2+) serves as cofactor. The cofactor is Mn(2+). In terms of processing, autophosphorylated. Phosphorylated by activin receptor type-2 (ACVR2A or ACVR2B) in response to activin-binding at serine and threonine residues in the GS domain. Phosphorylation of ACVR1B by activin receptor type-2 regulates association with SMAD7. Ubiquitinated. Level of ubiquitination is regulated by the SMAD7-SMURF1 complex. Post-translationally, ubiquitinated. As to expression, expressed in many tissues, most strongly in kidney, pancreas, brain, lung, and liver.

Its subcellular location is the cell membrane. The catalysed reaction is L-threonyl-[receptor-protein] + ATP = O-phospho-L-threonyl-[receptor-protein] + ADP + H(+). It catalyses the reaction L-seryl-[receptor-protein] + ATP = O-phospho-L-seryl-[receptor-protein] + ADP + H(+). Its activity is regulated as follows. Activin receptor type-2 (ACVR2A or ACVR2B) activates the type-1 receptor through phosphorylation of its regulatory GS domain. Transmembrane serine/threonine kinase activin type-1 receptor forming an activin receptor complex with activin receptor type-2 (ACVR2A or ACVR2B). Transduces the activin signal from the cell surface to the cytoplasm and is thus regulating a many physiological and pathological processes including neuronal differentiation and neuronal survival, hair follicle development and cycling, FSH production by the pituitary gland, wound healing, extracellular matrix production, immunosuppression and carcinogenesis. Activin is also thought to have a paracrine or autocrine role in follicular development in the ovary. Within the receptor complex, type-2 receptors (ACVR2A and/or ACVR2B) act as a primary activin receptors whereas the type-1 receptors like ACVR1B act as downstream transducers of activin signals. Activin binds to type-2 receptor at the plasma membrane and activates its serine-threonine kinase. The activated receptor type-2 then phosphorylates and activates the type-1 receptor such as ACVR1B. Once activated, the type-1 receptor binds and phosphorylates the SMAD proteins SMAD2 and SMAD3, on serine residues of the C-terminal tail. Soon after their association with the activin receptor and subsequent phosphorylation, SMAD2 and SMAD3 are released into the cytoplasm where they interact with the common partner SMAD4. This SMAD complex translocates into the nucleus where it mediates activin-induced transcription. Inhibitory SMAD7, which is recruited to ACVR1B through FKBP1A, can prevent the association of SMAD2 and SMAD3 with the activin receptor complex, thereby blocking the activin signal. Activin signal transduction is also antagonized by the binding to the receptor of inhibin-B via the IGSF1 inhibin coreceptor. ACVR1B also phosphorylates TDP2. This Homo sapiens (Human) protein is Activin receptor type-1B (ACVR1B).